The chain runs to 727 residues: Glycerol-3-phosphate dehydrogenase, mitochondrial (727 aa).

Residues 1–42 constitute a mitochondrion transit peptide; sequence MAFQKAVKGTILVGGGALATVLGLSHFAHYKRKQVNLAFVEA. 71 to 99 lines the FAD pocket; sequence DVLVIGGGATGSGCALDAVTRGLKTALVE. Y601 is subject to Phosphotyrosine. EF-hand domains follow at residues 623 to 658 and 659 to 694; these read SDID…IGVQ and MDEN…IQKG. 5 residues coordinate Ca(2+): D672, N674, N676, Q678, and E683.

Belongs to the FAD-dependent glycerol-3-phosphate dehydrogenase family. FAD serves as cofactor.

Its subcellular location is the mitochondrion. The enzyme catalyses a quinone + sn-glycerol 3-phosphate = dihydroxyacetone phosphate + a quinol. Its pathway is polyol metabolism; glycerol degradation via glycerol kinase pathway; glycerone phosphate from sn-glycerol 3-phosphate (aerobic route): step 1/1. Calcium-binding enhance the activity of the enzyme. Functionally, calcium-responsive mitochondrial glycerol-3-phosphate dehydrogenase which seems to be a key component of the pancreatic beta-cell glucose-sensing device. The polypeptide is Glycerol-3-phosphate dehydrogenase, mitochondrial (GPD2) (Bos taurus (Bovine)).